The sequence spans 236 residues: Small ribosomal subunit protein uS2c (236 aa).

Belongs to the universal ribosomal protein uS2 family.

Its subcellular location is the plastid. The protein localises to the chloroplast. The protein is Small ribosomal subunit protein uS2c (rps2) of Populus alba (White poplar).